The primary structure comprises 736 residues: Catalase-peroxidase (736 aa).

The interval 1 to 25 is disordered; that stretch reads MSENGKCPVTGKTSKPVAGGGTSNQ. The segment at residues 96 to 224 is a cross-link (tryptophyl-tyrosyl-methioninium (Trp-Tyr) (with M-250)); it reads WHSAGTYRMG…LAAVQMGLIY (129 aa). H97 functions as the Proton acceptor in the catalytic mechanism. The tryptophyl-tyrosyl-methioninium (Tyr-Met) (with W-96) cross-link spans 224-250; sequence YVNPEGPDGNPDPIASGKDVRETFARM. H265 serves as a coordination point for heme b. A disordered region spans residues 294–313; it reads GWKSSHGRGKGGDTISSGIE.

It belongs to the peroxidase family. Peroxidase/catalase subfamily. As to quaternary structure, homodimer or homotetramer. Requires heme b as cofactor. In terms of processing, formation of the three residue Trp-Tyr-Met cross-link is important for the catalase, but not the peroxidase activity of the enzyme.

It catalyses the reaction H2O2 + AH2 = A + 2 H2O. The enzyme catalyses 2 H2O2 = O2 + 2 H2O. Functionally, bifunctional enzyme with both catalase and broad-spectrum peroxidase activity. The chain is Catalase-peroxidase from Desulfatibacillum aliphaticivorans.